A 277-amino-acid polypeptide reads, in one-letter code: Orotidine 5'-phosphate decarboxylase (277 aa).

Substrate-binding positions include D40, 62–64 (KTH), 93–102 (DRKFIDIGNT), Y229, and R247. The active-site Proton donor is the K95.

The protein belongs to the OMP decarboxylase family.

The enzyme catalyses orotidine 5'-phosphate + H(+) = UMP + CO2. The protein operates within pyrimidine metabolism; UMP biosynthesis via de novo pathway; UMP from orotate: step 2/2. The polypeptide is Orotidine 5'-phosphate decarboxylase (pyrG) (Aspergillus kawachii (White koji mold)).